The chain runs to 142 residues: Deoxyuridine 5'-triphosphate nucleotidohydrolase (142 aa).

Residues 62–64 (RSG), asparagine 75, and 79–81 (TID) each bind substrate.

This sequence belongs to the dUTPase family. Requires Mg(2+) as cofactor.

It carries out the reaction dUTP + H2O = dUMP + diphosphate + H(+). It functions in the pathway pyrimidine metabolism; dUMP biosynthesis; dUMP from dCTP (dUTP route): step 2/2. Functionally, this enzyme is involved in nucleotide metabolism: it produces dUMP, the immediate precursor of thymidine nucleotides and it decreases the intracellular concentration of dUTP so that uracil cannot be incorporated into DNA. The polypeptide is Deoxyuridine 5'-triphosphate nucleotidohydrolase (Trichodesmium erythraeum (strain IMS101)).